The sequence spans 207 residues: Basic helix-loop-helix transcription factor scleraxis (207 aa).

Disordered stretches follow at residues 1–91 and 151–183; these read MSFA…RDRT and AFFH…QPKQ. Positions 73–91 are enriched in basic and acidic residues; the sequence is PGREPRQRHTANARERDRT. Positions 78 to 130 constitute a bHLH domain; sequence RQRHTANARERDRTNSVNTAFTALRTLIPTEPADRKLSKIETLRLASSYISHL. A compositionally biased stretch (pro residues) spans 161–171; that stretch reads PLPPPPPPPPL.

As to quaternary structure, efficient DNA binding requires dimerization with another bHLH protein. Dimerizes and binds the E-box consensus sequence with E12. As to expression, expressed in mesenchymal precursors of cartilage and in connective tissue. Highly expressed in tendons in the limb, tongue and diaphragm and in cartilage of the bronchi.

It is found in the nucleus. In terms of biological role, plays an early essential role in mesoderm formation, as well as a later role in formation of somite-derived chondrogenic lineages. In Mus musculus (Mouse), this protein is Basic helix-loop-helix transcription factor scleraxis (Scx).